The following is a 509-amino-acid chain: MVKVPHLLVATFGVLLVLNGCLARQSLGVPPQLGNACNLDNLDVLQPTETIKSEAGRVEYWDHNNPQIRCAGVSVSRVIIEQGGLYLPTFFSSPKISYVVQGMGISGRVVPGCAETFMDSQPMQGQQQGQPWQGQQGQQGQQGQQGQQGQQGQQGQQGQQGQQGQQGQQQQGFRDMHQKVEHVRHGDIIAITAGSSHWIYNTGDQPLVIICLLDIANYQNQLDRNPRTFRLAGNNPQGGSQQQQQQQQNMLSGFDPQVLAQALKIDVRLAQELQNQQDSRGNIVRVKGPFQVVRPPLRQPYESEQWRHPRGPPQSPQDNGLEETICSMRTHENIDDPARADVYKPNLGRVTSVNSYTLPILQYIRLSATRGILQGNAMVLPKYNMNANEILYCTQGQARIQVVNDNGQNVLDQQVQKGQLVVIPQGFAYVVQSHQNNFEWISFKTNANAMVSTLAGRTSALRALPLEVITNAFQISLEEARRIKFNTLETTLTRARGGQPQLIEEIVEA.

The N-terminal stretch at 1–23 (MVKVPHLLVATFGVLLVLNGCLA) is a signal peptide. An intrachain disulfide couples Cys-37 to Cys-70. Residues 42–271 (LDVLQPTETI…ALKIDVRLAQ (230 aa)) enclose the Cupin type-1 1 domain. Phosphoserine is present on residues Ser-53 and Ser-97. The cysteines at positions 113 and 326 are disulfide-linked. At Thr-116 the chain carries Phosphothreonine. 3 disordered regions span residues 119–175 (DSQP…GFRD), 230–249 (RLAGNNPQGGSQQQQQQQQN), and 301–321 (YESEQWRHPRGPPQSPQDNGL). The span at 124–172 (QGQQQGQPWQGQQGQQGQQGQQGQQGQQGQQGQQGQQGQQGQQGQQQQG) shows a compositional bias: low complexity. Residues 332 to 481 (ENIDDPARAD…AFQISLEEAR (150 aa)) form the Cupin type-1 2 domain. Ser-352 carries the post-translational modification Phosphoserine. A phosphothreonine mark is found at Thr-445 and Thr-487.

It belongs to the 11S seed storage protein (globulins) family. As to quaternary structure, hexamer; each subunit is composed of an acidic and a basic chain derived from a single precursor and linked by a disulfide bond.

Its function is as follows. This is a seed storage protein. In Brassica napus (Rape), this protein is Cruciferin CRU1 (CRU1).